An 828-amino-acid polypeptide reads, in one-letter code: Phenylalanine--tRNA ligase beta subunit (828 aa).

One can recognise a tRNA-binding domain in the interval Leu43 to Leu161. The disordered stretch occupies residues Lys203–Asn230. A B5 domain is found at Arg436–Pro519. Mg(2+) is bound by residues Asp497, Asp503, and Asp507. In terms of domain architecture, FDX-ACB spans Pro736–Arg828.

Belongs to the phenylalanyl-tRNA synthetase beta subunit family. Type 1 subfamily. In terms of assembly, tetramer of two alpha and two beta subunits. Mg(2+) is required as a cofactor.

It is found in the cytoplasm. The enzyme catalyses tRNA(Phe) + L-phenylalanine + ATP = L-phenylalanyl-tRNA(Phe) + AMP + diphosphate + H(+). The chain is Phenylalanine--tRNA ligase beta subunit from Aster yellows witches'-broom phytoplasma (strain AYWB).